A 264-amino-acid chain; its full sequence is tRNA (guanine-N(1)-)-methyltransferase (264 aa).

Residues G113 and 133–138 (IGDYVL) contribute to the S-adenosyl-L-methionine site. Residues 244-264 (VQQAATPGGQRRPPWHRDSRA) are disordered.

Belongs to the RNA methyltransferase TrmD family. As to quaternary structure, homodimer.

It is found in the cytoplasm. It carries out the reaction guanosine(37) in tRNA + S-adenosyl-L-methionine = N(1)-methylguanosine(37) in tRNA + S-adenosyl-L-homocysteine + H(+). In terms of biological role, specifically methylates guanosine-37 in various tRNAs. The sequence is that of tRNA (guanine-N(1)-)-methyltransferase from Frankia alni (strain DSM 45986 / CECT 9034 / ACN14a).